A 418-amino-acid chain; its full sequence is UDP-N-acetylglucosamine 1-carboxyvinyltransferase (418 aa).

22 to 23 serves as a coordination point for phosphoenolpyruvate; sequence KN. R91 lines the UDP-N-acetyl-alpha-D-glucosamine pocket. The active-site Proton donor is C115. C115 is subject to 2-(S-cysteinyl)pyruvic acid O-phosphothioketal. Positions 303 and 325 each coordinate UDP-N-acetyl-alpha-D-glucosamine.

It belongs to the EPSP synthase family. MurA subfamily.

The protein localises to the cytoplasm. It catalyses the reaction phosphoenolpyruvate + UDP-N-acetyl-alpha-D-glucosamine = UDP-N-acetyl-3-O-(1-carboxyvinyl)-alpha-D-glucosamine + phosphate. Its pathway is cell wall biogenesis; peptidoglycan biosynthesis. In terms of biological role, cell wall formation. Adds enolpyruvyl to UDP-N-acetylglucosamine. The sequence is that of UDP-N-acetylglucosamine 1-carboxyvinyltransferase from Syntrophobacter fumaroxidans (strain DSM 10017 / MPOB).